The following is a 128-amino-acid chain: Ribosome-binding factor A (128 aa).

This sequence belongs to the RbfA family. As to quaternary structure, monomer. Binds 30S ribosomal subunits, but not 50S ribosomal subunits or 70S ribosomes.

It localises to the cytoplasm. In terms of biological role, one of several proteins that assist in the late maturation steps of the functional core of the 30S ribosomal subunit. Associates with free 30S ribosomal subunits (but not with 30S subunits that are part of 70S ribosomes or polysomes). Required for efficient processing of 16S rRNA. May interact with the 5'-terminal helix region of 16S rRNA. The protein is Ribosome-binding factor A of Rickettsia prowazekii (strain Madrid E).